The chain runs to 259 residues: Flap endonuclease Xni (259 aa).

Mg(2+) is bound at residue Asp109. A 5'-3' exonuclease domain is found at 165–255; sequence VKPQQLSDYW…FNLQDLRFTA (91 aa). Residues Leu176, Ile187, and Ile190 each contribute to the K(+) site. The segment at 189 to 194 is interaction with DNA; the sequence is GIGPKA.

It belongs to the Xni family. Requires Mg(2+) as cofactor. K(+) serves as cofactor.

Has flap endonuclease activity. During DNA replication, flap endonucleases cleave the 5'-overhanging flap structure that is generated by displacement synthesis when DNA polymerase encounters the 5'-end of a downstream Okazaki fragment. This Vibrio vulnificus (strain YJ016) protein is Flap endonuclease Xni.